Here is a 1097-residue protein sequence, read N- to C-terminus: Apolipoprotein B receptor (1097 aa).

Disordered stretches follow at residues 64 to 249 (QEDL…KGEE), 262 to 376 (AWGT…WTTS), 410 to 739 (EEEG…SRRG), 789 to 866 (GWDS…ARAE), and 889 to 1097 (VGWQ…PKPQ). Basic and acidic residues-rich tracts occupy residues 83 to 92 (GPGDDRRHEV), 158 to 177 (ERQE…RSWE), and 185 to 208 (VRAR…ETEG). Residues 209 to 218 (KAGAVGPKAA) show a composition bias toward low complexity. Composition is skewed to basic and acidic residues over residues 219–232 (GDNR…READ) and 279–302 (GREE…EEAR). Residues 312 to 330 (TASGGEEAETASGGEEAGT) show a composition bias toward low complexity. The span at 331–362 (ASGGEEAGIASGGEAGTASGGEEAGTASGGEE) shows a compositional bias: gly residues. Ser458 bears the Phosphoserine mark. 2 stretches are compositionally biased toward basic and acidic residues: residues 463–487 (VDLR…RMEE) and 496–505 (EERGSSRDPV). Ser510 bears the Phosphoserine mark. Thr572 carries the phosphothreonine modification. Ser594 is subject to Phosphoserine. Composition is skewed to basic and acidic residues over residues 594–606 (SKEE…EAGP) and 626–637 (NRTRKDMERGNT). The span at 640 to 652 (DAADGEQREEEET) shows a compositional bias: acidic residues. Basic and acidic residues-rich tracts occupy residues 791–800 (DSKEKEEAAA), 892–918 (QERE…RLLD), and 928–950 (RRAE…EEQP). The span at 1000–1017 (SRVHLSRSSSQRRSRPSF) shows a compositional bias: basic residues. The segment covering 1041-1050 (APEQRPLQLE) has biased composition (low complexity).

In terms of assembly, homodimer. There are 2 forms in macrophages, the membrane-binding proteins 200 kDa (MBP 200) and 235 kDa (MBP 235), that can be reduced into a single active ligand-binding species with intermediate mobility (MBP 200R). Expressed in peripheral blood leukocytes &gt; bone marrow = spleen &gt; lymph node, and only faintly visible in appendix and thymus. Expressed in the brain, heart, kidney, liver, lung, pancreas, and placenta. Expressed primarily by reticuloendothelial cells: monocytes, macrophages, and endothelial cells. Expressed in atherosclerotic lesion foam cells.

It is found in the cell membrane. In terms of biological role, macrophage receptor that binds to the apolipoprotein B48 (APOB) of dietary triglyceride (TG)-rich lipoproteins (TRL) or to a like domain of APOB in hypertriglyceridemic very low density lipoprotein (HTG-VLDL). Binds and internalizes TRL when out of the context of the macrophage. May provide essential lipids to reticuloendothelial cells. Could also be involved in foam cell formation with elevated TRL and remnant lipoprotein (RLP). Mediates the rapid high-affinity uptake of chylomicrons (CM), HTG-VLDL, and trypsinized (tryp) VLDL devoid of APOE in vitro in macrophages. This chain is Apolipoprotein B receptor, found in Homo sapiens (Human).